Consider the following 200-residue polypeptide: Max dimerization protein 3 (200 aa).

Disordered stretches follow at residues 31–56 (SILP…DNVR) and 133–164 (RLLP…QEDL). A bHLH domain is found at 54 to 106 (NVRSVHNELEKHRRAQLRRCLEQLKQQVPLSMENSRHTTLSLLHRAKQHIKKL).

In terms of assembly, efficient DNA binding requires dimerization with another bHLH protein. Binds DNA as a heterodimer with MAX. As to expression, expressed broadly throughout the CNS and the eye, starting at neurula stages.

It localises to the nucleus. Transcriptional repressor. Binds with MAX to form a sequence-specific DNA-binding protein complex which recognizes the core sequence 5'-CAC[GA]TG-3'. This chain is Max dimerization protein 3 (mxd3), found in Xenopus laevis (African clawed frog).